Consider the following 162-residue polypeptide: HTH-type transcriptional regulator IscR (162 aa).

The HTH rrf2-type domain maps to 2-131; the sequence is RLTSKGRYAV…NNITLGELVN (130 aa). A DNA-binding region (H-T-H motif) is located at residues 28–51; it reads LADISERQGISLSYLEQLFSRLRK. Residues Cys92, Cys98, and Cys104 each coordinate [2Fe-2S] cluster. The disordered stretch occupies residues 140-162; the sequence is GRQHTHDAPRTRTQDAIDVKLRA. Residues 143–162 are compositionally biased toward basic and acidic residues; the sequence is HTHDAPRTRTQDAIDVKLRA.

[2Fe-2S] cluster serves as cofactor.

Functionally, regulates the transcription of several operons and genes involved in the biogenesis of Fe-S clusters and Fe-S-containing proteins. The chain is HTH-type transcriptional regulator IscR from Shigella flexneri.